The chain runs to 1258 residues: MGDMANSSIEFHPKPQQQREVPHVGGFGCTLAELRSLMELRGAEALQKIQEAYGDVSGLCRRLKTSPTEGLADNTNDLEKRRQIYGQNFIPPKQPKTFLQLVWEALQDVTLIILEVAAIVSLGLSFYAPPGEESEACGNVSGGAEDEGEAEAGWIEGAAILLSVICVVLVTAFNDWSKEKQFRGLQSRIEQEQKFTVIRNGQLLQVPVAALVVGDIAQVKYGDLLPADGVLIQGNDLKIDESSLTGESDHVRKSADKDPMLLSGTHVMEGSGRMVVTAVGVNSQTGIIFTLLGAGGEEEEKKDKKGKQQDGAMESSQTKAKKQDGAVAMEMQPLKSAEGGEMEEREKKKANVPKKEKSVLQGKLTKLAVQIGKAGLVMSAITVIILVLYFVIETFVVDGRVWLAECTPVYVQYFVKFFIIGVTVLVVAVPEGLPLAVTISLAYSVKKMMKDNNLVRHLDACETMGNATAICSDKTGTLTTNRMTVVQSYLGDTHYKEIPAPSALTPKILDLLVHAISINSAYTTKILPPEKEGALPRQVGNKTECALLGFILDLKRDFQPVREQIPEDQLYKVYTFNSVRKSMSTVIRMPDGGFRLFSKGASEILLKKCTNILNSNGELRGFRPRDRDDMVKKIIEPMACDGLRTICIAYRDFSAIQEPDWDNENEVVGDLTCIAVVGIEDPVRPEVPEAIRKCQRAGITVRMVTGDNINTARAIAAKCGIIQPGEDFLCLEGKEFNRRIRNEKGEIEQERLDKVWPKLRVLARSSPTDKHTLVKGIIDSTTGEQRQVVAVTGDGTNDGPALKKADVGFAMGIAGTDVAKEASDIILTDDNFTSIVKAVMWGRNVYDSISKFLQFQLTVNVVAVIVAFTGACITQDSPLKAVQMLWVNLIMDTFASLALATEPPTESLLLRKPYGRDKPLISRTMMKNILGHAVYQLTIIFTLLFVGELFFDIDSGRNAPLHSPPSEHYTIIFNTFVMMQLFNEINARKIHGERNVFDGIFSNPIFCTIVLGTFGIQIVIVQFGGKPFSCSPLSTEQWLWCLFVGVGELVWGQVIATIPTSQLKCLKEAGHGPGKDEMTDEELAEGEEEIDHAERELRRGQILWFRGLNRIQTQMEVVSTFKRSGSFQGAVRRRSSVLSQLHDVTNLSTPTHIRVVKAFRSSLYEGLEKPESKSCIHNFMATPEFLINDYTHNIPLIDDTDVDENEERLRAPPPPPPNQNNNAIDSGIYLTTHATKSATSSAFSSRPGSPLHSMETSL.

Residues 1–19 (MGDMANSSIEFHPKPQQQR) show a composition bias toward polar residues. The interval 1–22 (MGDMANSSIEFHPKPQQQREVP) is disordered. At 1–97 (MGDMANSSIE…NFIPPKQPKT (97 aa)) the chain is on the cytoplasmic side. The residue at position 8 (S8) is a Phosphoserine. Residues 98-118 (FLQLVWEALQDVTLIILEVAA) form a helical membrane-spanning segment. Residues 119 to 155 (IVSLGLSFYAPPGEESEACGNVSGGAEDEGEAEAGWI) are Extracellular-facing. The chain crosses the membrane as a helical span at residues 156–176 (EGAAILLSVICVVLVTAFNDW). Residues 177-364 (SKEKQFRGLQ…KEKSVLQGKL (188 aa)) lie on the Cytoplasmic side of the membrane. Disordered stretches follow at residues 298 to 328 (EEEK…GAVA) and 335 to 354 (KSAE…NVPK). Basic and acidic residues-rich tracts occupy residues 299-308 (EEKKDKKGKQ) and 342-354 (MEER…NVPK). The helical transmembrane segment at 365-384 (TKLAVQIGKAGLVMSAITVI) threads the bilayer. At 385–417 (ILVLYFVIETFVVDGRVWLAECTPVYVQYFVKF) the chain is on the extracellular side. Residues 418–435 (FIIGVTVLVVAVPEGLPL) form a helical membrane-spanning segment. At 436–849 (AVTISLAYSV…MWGRNVYDSI (414 aa)) the chain is on the cytoplasmic side. The active-site 4-aspartylphosphate intermediate is D473. Residues D794 and D798 each contribute to the Mg(2+) site. The helical transmembrane segment at 850–869 (SKFLQFQLTVNVVAVIVAFT) threads the bilayer. The Extracellular segment spans residues 870-879 (GACITQDSPL). Residues 880–900 (KAVQMLWVNLIMDTFASLALA) form a helical membrane-spanning segment. Residues 901–920 (TEPPTESLLLRKPYGRDKPL) are Cytoplasmic-facing. The helical transmembrane segment at 921–943 (ISRTMMKNILGHAVYQLTIIFTL) threads the bilayer. Residues 944–961 (LFVGELFFDIDSGRNAPL) are Extracellular-facing. The chain crosses the membrane as a helical span at residues 962–983 (HSPPSEHYTIIFNTFVMMQLFN). At 984–1002 (EINARKIHGERNVFDGIFS) the chain is on the cytoplasmic side. The helical transmembrane segment at 1003–1024 (NPIFCTIVLGTFGIQIVIVQFG) threads the bilayer. The Extracellular portion of the chain corresponds to 1025-1034 (GKPFSCSPLS). Residues 1035–1056 (TEQWLWCLFVGVGELVWGQVIA) form a helical membrane-spanning segment. Residues 1057-1258 (TIPTSQLKCL…SPLHSMETSL (202 aa)) lie on the Cytoplasmic side of the membrane. T1079 bears the Phosphothreonine mark. The segment at 1097 to 1114 (LRRGQILWFRGLNRIQTQ) is calmodulin-binding subdomain A. A Phosphothreonine; by PKC modification is found at T1113. The interval 1115–1124 (MEVVSTFKRS) is calmodulin-binding subdomain B. Position 1126 is a phosphoserine (S1126). Residues 1204–1258 (ENEERLRAPPPPPPNQNNNAIDSGIYLTTHATKSATSSAFSSRPGSPLHSMETSL) form a disordered region. The segment covering 1231–1245 (TTHATKSATSSAFSS) has biased composition (low complexity).

The protein belongs to the cation transport ATPase (P-type) (TC 3.A.3) family. Type IIB subfamily. As to quaternary structure, interacts with PDZD11. Interacts (via N-terminus) with YWHAE. As to expression, expressed predominantly in brain and skeletal muscle. Expressed in the molecular layer of the cerebellar cortex, in particular in granule cells (at protein level). Expressed in aldosterone producing glomerulosa cells of adrenal glands (at protein level). Detected at low levels in various tissues including testis, stomach, small intestine, and large intestine. In terms of tissue distribution, most abundant form in brain and most other tissues. Most abundant form in skeletal muscle and is also found in brain and at low levels in testis and kidney.

The protein resides in the cell membrane. The protein localises to the presynaptic cell membrane. It catalyses the reaction Ca(2+)(in) + ATP + H2O = Ca(2+)(out) + ADP + phosphate + H(+). In terms of biological role, ATP-driven Ca(2+) ion pump involved in the maintenance of basal intracellular Ca(2+) levels at the presynaptic terminals. Uses ATP as an energy source to transport cytosolic Ca(2+) ions across the plasma membrane to the extracellular compartment. May counter-transport protons, but the mechanism and the stoichiometry of this Ca(2+)/H(+) exchange remains to be established. This Rattus norvegicus (Rat) protein is Plasma membrane calcium-transporting ATPase 3 (Atp2b3).